We begin with the raw amino-acid sequence, 145 residues long: Transcription antitermination protein NusB (145 aa).

Belongs to the NusB family.

Its function is as follows. Involved in transcription antitermination. Required for transcription of ribosomal RNA (rRNA) genes. Binds specifically to the boxA antiterminator sequence of the ribosomal RNA (rrn) operons. The protein is Transcription antitermination protein NusB of Citrifermentans bemidjiense (strain ATCC BAA-1014 / DSM 16622 / JCM 12645 / Bem) (Geobacter bemidjiensis).